The following is a 430-amino-acid chain: Adenylosuccinate synthetase (430 aa).

GTP-binding positions include 13 to 19 (GDEGKGK) and 41 to 43 (GHT). Asp14 acts as the Proton acceptor in catalysis. Asp14 and Gly41 together coordinate Mg(2+). IMP-binding positions include 14-17 (DEGK), 39-42 (NAGH), Thr130, Arg144, Gln225, Thr240, and Arg304. His42 acts as the Proton donor in catalysis. 300–306 (STTGRAR) is a binding site for substrate. Residues Arg306, 332 to 334 (KLD), and 414 to 416 (STG) contribute to the GTP site.

The protein belongs to the adenylosuccinate synthetase family. As to quaternary structure, homodimer. Mg(2+) is required as a cofactor.

Its subcellular location is the cytoplasm. The catalysed reaction is IMP + L-aspartate + GTP = N(6)-(1,2-dicarboxyethyl)-AMP + GDP + phosphate + 2 H(+). Its pathway is purine metabolism; AMP biosynthesis via de novo pathway; AMP from IMP: step 1/2. Functionally, plays an important role in the de novo pathway of purine nucleotide biosynthesis. Catalyzes the first committed step in the biosynthesis of AMP from IMP. In Azotobacter vinelandii (strain DJ / ATCC BAA-1303), this protein is Adenylosuccinate synthetase.